The primary structure comprises 660 residues: tRNA 5-methylaminomethyl-2-thiouridine biosynthesis bifunctional protein MnmC (660 aa).

The tract at residues 1–235 (MTITRHARID…KWEVLRGAFI (235 aa)) is tRNA (mnm(5)s(2)U34)-methyltransferase. An FAD-dependent cmnm(5)s(2)U34 oxidoreductase region spans residues 266–660 (IGAGLAGCAT…LRGLIRGGGK (395 aa)).

It in the N-terminal section; belongs to the methyltransferase superfamily. tRNA (mnm(5)s(2)U34)-methyltransferase family. The protein in the C-terminal section; belongs to the DAO family. The cofactor is FAD.

It is found in the cytoplasm. The enzyme catalyses 5-aminomethyl-2-thiouridine(34) in tRNA + S-adenosyl-L-methionine = 5-methylaminomethyl-2-thiouridine(34) in tRNA + S-adenosyl-L-homocysteine + H(+). Functionally, catalyzes the last two steps in the biosynthesis of 5-methylaminomethyl-2-thiouridine (mnm(5)s(2)U) at the wobble position (U34) in tRNA. Catalyzes the FAD-dependent demodification of cmnm(5)s(2)U34 to nm(5)s(2)U34, followed by the transfer of a methyl group from S-adenosyl-L-methionine to nm(5)s(2)U34, to form mnm(5)s(2)U34. This chain is tRNA 5-methylaminomethyl-2-thiouridine biosynthesis bifunctional protein MnmC, found in Pseudomonas syringae pv. tomato (strain ATCC BAA-871 / DC3000).